Reading from the N-terminus, the 402-residue chain is Arginine biosynthesis bifunctional protein ArgJ (402 aa).

The substrate site is built by threonine 149, lysine 175, threonine 186, glutamate 266, asparagine 397, and threonine 402. Threonine 186 serves as the catalytic Nucleophile.

The protein belongs to the ArgJ family. In terms of assembly, heterotetramer of two alpha and two beta chains.

It is found in the cytoplasm. It carries out the reaction N(2)-acetyl-L-ornithine + L-glutamate = N-acetyl-L-glutamate + L-ornithine. The catalysed reaction is L-glutamate + acetyl-CoA = N-acetyl-L-glutamate + CoA + H(+). Its pathway is amino-acid biosynthesis; L-arginine biosynthesis; L-ornithine and N-acetyl-L-glutamate from L-glutamate and N(2)-acetyl-L-ornithine (cyclic): step 1/1. The protein operates within amino-acid biosynthesis; L-arginine biosynthesis; N(2)-acetyl-L-ornithine from L-glutamate: step 1/4. Functionally, catalyzes two activities which are involved in the cyclic version of arginine biosynthesis: the synthesis of N-acetylglutamate from glutamate and acetyl-CoA as the acetyl donor, and of ornithine by transacetylation between N(2)-acetylornithine and glutamate. The chain is Arginine biosynthesis bifunctional protein ArgJ from Prochlorococcus marinus subsp. pastoris (strain CCMP1986 / NIES-2087 / MED4).